A 53-amino-acid chain; its full sequence is Rubredoxin-1 (53 aa).

Positions 1 to 53 (MEKFVCDVCGYIYDPVVGDPDNGVAPGTKFKDIPDTWVCPLCKLDKTHFSKVE) constitute a Rubredoxin-like domain. The Fe cation site is built by C6, C9, C39, and C42.

This sequence belongs to the rubredoxin family. Fe(3+) is required as a cofactor.

Its function is as follows. Rubredoxin is a small nonheme, iron protein lacking acid-labile sulfide. Its single Fe, chelated to 4 Cys, functions as an electron acceptor and may also stabilize the conformation of the molecule. The sequence is that of Rubredoxin-1 (rubR1) from Clostridium perfringens (strain 13 / Type A).